The chain runs to 73 residues: MAKKDGAIEVEGRVVEPLPNAMFRIELENGHKVLAHISGKMRQHYIRILPEDRVVVELSPYDLSRGRIVYRYK.

The region spanning 1–73 (MAKKDGAIEV…SRGRIVYRYK (73 aa)) is the S1-like domain.

The protein belongs to the IF-1 family. Component of the 30S ribosomal translation pre-initiation complex which assembles on the 30S ribosome in the order IF-2 and IF-3, IF-1 and N-formylmethionyl-tRNA(fMet); mRNA recruitment can occur at any time during PIC assembly.

The protein resides in the cytoplasm. One of the essential components for the initiation of protein synthesis. Stabilizes the binding of IF-2 and IF-3 on the 30S subunit to which N-formylmethionyl-tRNA(fMet) subsequently binds. Helps modulate mRNA selection, yielding the 30S pre-initiation complex (PIC). Upon addition of the 50S ribosomal subunit IF-1, IF-2 and IF-3 are released leaving the mature 70S translation initiation complex. The sequence is that of Translation initiation factor IF-1 from Mycobacterium avium (strain 104).